A 261-amino-acid polypeptide reads, in one-letter code: Carnitinyl-CoA dehydratase (261 aa).

Glutamate 111 (nucleophile) is an active-site residue. The active-site Proton acceptor is glutamate 131.

This sequence belongs to the enoyl-CoA hydratase/isomerase family.

It catalyses the reaction (R)-carnitinyl-CoA = crotonobetainyl-CoA + H2O. The protein operates within amine and polyamine metabolism; carnitine metabolism. In terms of biological role, catalyzes the reversible dehydration of L-carnitinyl-CoA to crotonobetainyl-CoA. This chain is Carnitinyl-CoA dehydratase, found in Shigella flexneri.